Here is a 155-residue protein sequence, read N- to C-terminus: uncharacterized protein (155 aa).

A run of 4 helical transmembrane segments spans residues 2-24 (TFLFLILVFIIEILQLSVFPPIF), 62-84 (AVVNFLGFISLLNVVFTYLYLVL), 97-116 (VFLIMPLILLLRKLTIFLVV), and 131-148 (VVLLIDLIFLILLYKVFN).

Its subcellular location is the cell membrane. This is an uncharacterized protein from Aquifex aeolicus (strain VF5).